The primary structure comprises 125 residues: Transposase for transposon Tn554 (125 aa).

Its function is as follows. One of three proteins encoded by transposon Tn554 required for its transposition. This chain is Transposase for transposon Tn554 (tnpC1), found in Staphylococcus aureus (strain Mu50 / ATCC 700699).